Reading from the N-terminus, the 478-residue chain is POU domain, class 2, transcription factor 2 (478 aa).

Disordered stretches follow at residues 1-82, 167-199, 275-298, 357-391, and 409-478; these read MVHS…PPQA, QAVT…EASD, SSLP…GRRR, PCSA…PLSQ, and TLHP…PYQP. Positions 12–37 are enriched in basic and acidic residues; the sequence is RMSKPLEAEKQGLDSPSEHTDTERNG. Residues 38–60 are compositionally biased toward polar residues; sequence PDTNHQNPQNKTSPFSVSPTGPS. In terms of domain architecture, POU-specific spans 195 to 269; it reads EEASDLEELE…LLEKWLNDAE (75 aa). The segment covering 275-285 has biased composition (polar residues); the sequence is SSLPSPNQLSR. Positions 297 to 356 form a DNA-binding region, homeobox; it reads RRKKRTSIETNVRFALEKSFLANQKPTSEEILLIAEQLHMEKEVIRVWFCNRRQKEKRIN. The segment at 389–410 is leucine-zipper; it reads LSQASSSLSTTVTTLSSAVGTL. Residues 416–425 show a composition bias toward gly residues; it reads AGGGAAGGGA.

The protein belongs to the POU transcription factor family. Class-2 subfamily. Interacts with NR3C1, AR and PGR. Interacts with POU2AF1; the interaction increases POU2F2 transactivation activity. As to expression, predominantly expressed in B-cells.

Its subcellular location is the nucleus. With respect to regulation, transactivation activity is enhanced by transcriptional coactivator POU2AF1. Its function is as follows. Transcription factor that specifically binds to the octamer motif (5'-ATTTGCAT-3'). Regulates IL6 expression in B cells with POU2AF1. Regulates transcription in a number of tissues in addition to activating immunoglobulin gene expression. Modulates transcription transactivation by NR3C1, AR and PGR. The polypeptide is POU domain, class 2, transcription factor 2 (POU2F2) (Sus scrofa (Pig)).